We begin with the raw amino-acid sequence, 205 residues long: Inosine triphosphate pyrophosphatase (205 aa).

An ITP-binding site is contributed by 20–25 (TGNAKK). Mg(2+) is bound at residue Glu48. Residues Lys60, 76-77 (DT), Lys93, 152-155 (FGWD), Lys175, and 180-181 (HR) each bind ITP.

This sequence belongs to the HAM1 NTPase family. In terms of assembly, homodimer. The cofactor is Mg(2+). Mn(2+) is required as a cofactor.

The protein resides in the cytoplasm. The enzyme catalyses ITP + H2O = IMP + diphosphate + H(+). The catalysed reaction is dITP + H2O = dIMP + diphosphate + H(+). It carries out the reaction XTP + H2O = XMP + diphosphate + H(+). Its function is as follows. Pyrophosphatase that hydrolyzes non-canonical purine nucleotides such as inosine triphosphate (ITP), deoxyinosine triphosphate (dITP) or xanthosine 5'-triphosphate (XTP) to their respective monophosphate derivatives. The enzyme does not distinguish between the deoxy- and ribose forms. Probably excludes non-canonical purines from RNA and DNA precursor pools, thus preventing their incorporation into RNA and DNA and avoiding chromosomal lesions. The protein is Inosine triphosphate pyrophosphatase of Oryza sativa subsp. japonica (Rice).